A 540-amino-acid polypeptide reads, in one-letter code: Protein SOSEKI 3 (540 aa).

The interval 32–123 (KKVQIVYYLS…YVLKGSELFD (92 aa)) is DIX-like oligomerization domain. 2 disordered regions span residues 147-201 (EPPS…DAKN) and 219-294 (ADAS…SSLG). 2 stretches are compositionally biased toward low complexity: residues 150–163 (SSRS…SSSM) and 185–194 (RSVSSSGVSP). Residues 221–244 (ASTQTDETVSGRSKTPIETFSRGV) show a composition bias toward polar residues. A compositionally biased stretch (acidic residues) spans 246-256 (TDEDVSSEPET). Over residues 280 to 292 (NSVSPPFSNSASS) the composition is skewed to low complexity. An Association to cell membranes motif is present at residues 342–343 (CG). Residues 412-492 (KKDAADSNAS…KNIPCTTKTH (81 aa)) are disordered. Positions 418 to 437 (SNASLKRSSSYNGDRASNQM) are enriched in polar residues. Residues 471–482 (SEKRRDSSEDTT) show a composition bias toward basic and acidic residues.

It belongs to the SOSEKI family. As to quaternary structure, homodimer. Forms long polymer filaments with other SOKs proteins polymers (e.g. SOK1, SOK2, SOK3 and SOK4) crucial for polar localization and biological activity. Binds to ANGUSTIFOLIA (AN). In terms of tissue distribution, expressed during embryogenesis and in roots.

It localises to the cell membrane. In terms of biological role, SOSEKI proteins (SOK1-5) locally interpret global polarity cues and can influence cell division orientation to coordinate cell polarization relative to body axes, probably by guiding ANGUSTIFOLIA (AN) polarized localization. In Arabidopsis thaliana (Mouse-ear cress), this protein is Protein SOSEKI 3.